Reading from the N-terminus, the 565-residue chain is Wee1-like protein kinase 2 (565 aa).

Composition is skewed to basic and acidic residues over residues 1-12 and 26-52; these read MGDNGDNKELKQ and EGQK…DSEA. 2 disordered regions span residues 1–142 and 169–189; these read MGDN…TPGP and KSNG…EEGK. Ser-77 is modified (phosphoserine). The short motif at 173 to 175 is the Nuclear localization signal element; sequence KRK. Residues 178-189 are compositionally biased toward basic and acidic residues; the sequence is RDLEEAGPEEGK. The Protein kinase domain maps to 214–492; it reads FLEVEKIGVG…TRSRVLCPSL (279 aa). Residues 220–228 and Lys-243 each bind ATP; that span reads IGVGEFGTV. Residues 317 to 331 carry the Nuclear export signal motif; the sequence is KLKDILLQISLGLKY. Asp-341 (proton acceptor) is an active-site residue. Mg(2+)-binding residues include Asn-346 and Asp-382. A coiled-coil region spans residues 495–521; that stretch reads TEELQQQLNLEKFKTATLERELKEVQR. Residues 518–565 are disordered; that stretch reads EVQRAQSSKEGQSSPGVTGTHTGSRSTRRLVGGKSAKSSSFTWGQSSP. Polar residues-rich tracts occupy residues 521 to 534 and 553 to 565; these read RAQS…SPGV and AKSS…QSSP.

It belongs to the protein kinase superfamily. Ser/Thr protein kinase family. WEE1 subfamily. In terms of processing, phosphorylation leads to increase its activity. In terms of tissue distribution, ovary-specific.

It is found in the nucleus. It catalyses the reaction L-tyrosyl-[protein] + ATP = O-phospho-L-tyrosyl-[protein] + ADP + H(+). In terms of biological role, oocyte-specific protein tyrosine kinase that phosphorylates and inhibits CDK1 and acts as a key regulator of meiosis during both prophase I and metaphase II. Required to maintain meiotic arrest in oocytes during the germinal vesicle (GV) stage, a long period of quiescence at dictyate prophase I, by phosphorylating CDK1 at 'Tyr-15', leading to inhibit CDK1 activity and prevent meiotic reentry. Also required for metaphase II exit during egg activation by phosphorylating CDK1 at 'Tyr-15', to ensure exit from meiosis in oocytes and promote pronuclear formation. This Sus scrofa (Pig) protein is Wee1-like protein kinase 2 (WEE2).